The chain runs to 421 residues: MEF2-activating motif and SAP domain-containing transcriptional regulator (421 aa).

The MEF2-binding signature appears at 12-28; sequence IIRSKFRSVLQLRIHRR. 3 disordered regions span residues 104-156, 188-296, and 322-406; these read PPEQ…PPSH, KAML…ASLT, and DQVE…ADLS. Residues 165–199 form the SAP domain; sequence LEELTVSELRQQLRLRGLPVSGTKAMLLERMRGGT. Positions 191 to 214 are enriched in basic and acidic residues; sequence LLERMRGGTPPRERPKPRREDKEA. A transcription activation region spans residues 208–421; the sequence is RREDKEAAAP…LLWELLPDPW (214 aa). A compositionally biased stretch (polar residues) spans 230–241; it reads RLPSTVKASATN. A compositionally biased stretch (pro residues) spans 260 to 292; sequence ASVPAPTPSPALAPTPTPAPVPAPAPAPFPTPP. The span at 347 to 372 shows a compositional bias: low complexity; that stretch reads SPDSEGFSSVFSSSLPSPTSSLSPSP.

In terms of assembly, interacts with MEF2C. Expressed in skeletal muscle, brain, placenta and spleen.

It is found in the nucleus. Transcriptional coactivator. Stimulates the transcriptional activity of MEF2C. Stimulates MYOD1 activity in part via MEF2, resulting in an enhancement of skeletal muscle differentiation. The polypeptide is MEF2-activating motif and SAP domain-containing transcriptional regulator (Mamstr) (Mus musculus (Mouse)).